Here is a 154-residue protein sequence, read N- to C-terminus: ATP synthase subunit b (154 aa).

Residues 5–27 (LLGQAIAFTLFVWFCMKYVWPPI) traverse the membrane as a helical segment.

This sequence belongs to the ATPase B chain family. As to quaternary structure, F-type ATPases have 2 components, F(1) - the catalytic core - and F(0) - the membrane proton channel. F(1) has five subunits: alpha(3), beta(3), gamma(1), delta(1), epsilon(1). F(0) has three main subunits: a(1), b(2) and c(10-14). The alpha and beta chains form an alternating ring which encloses part of the gamma chain. F(1) is attached to F(0) by a central stalk formed by the gamma and epsilon chains, while a peripheral stalk is formed by the delta and b chains.

It localises to the cell inner membrane. Functionally, f(1)F(0) ATP synthase produces ATP from ADP in the presence of a proton or sodium gradient. F-type ATPases consist of two structural domains, F(1) containing the extramembraneous catalytic core and F(0) containing the membrane proton channel, linked together by a central stalk and a peripheral stalk. During catalysis, ATP synthesis in the catalytic domain of F(1) is coupled via a rotary mechanism of the central stalk subunits to proton translocation. Its function is as follows. Component of the F(0) channel, it forms part of the peripheral stalk, linking F(1) to F(0). This is ATP synthase subunit b from Aliivibrio fischeri (strain ATCC 700601 / ES114) (Vibrio fischeri).